An 852-amino-acid polypeptide reads, in one-letter code: MRPERLTVRNFLGLKNVDIEFQSGITVVEGPNGAGKSSLFEAISFALFGNGIRYPNSYDYVNRNAVDGTARLVFQFERGGKRYEIIREINALQRKHNAKLSEILENGKKAAIAAKPTSVKQEVEKILGIEHRTFIRTVFLPQGEIDKLLISPPSEITEIISDVFQSKETLEKLEKLLKEKMKKLENEISSLQALYTAIWKYLEENDLEVLKSELKTVSEKKKELLKKREELQKEEEQLKRLLEKYRELVKKKERLRVLSLRRNELQKEVIYEQKVKKAKELEPLFREIYLRQREFERFSQELNSREKRYKELESEKEAISKEIPVHRERLSKLEEIGEKIKEELDLLEKVLKASRPLLEQRIRLKENLTRLEEEFRRLVGEKEKREKELLSIEKTENETKNELEKLLDELSILKKDHMKWLAYQIASSLNEGDTCPVCGGVFHGKVEAVEFNIDEFEKLDQKRSELENTLNVLKERKKSLSSLIEDLLMKIEEGKKNLKSIRNQIEKIEEELHRLGYSEDLEEKLDEKRKKLRKIEEERHSISQKITAADVQISQIENQLKEIKGEIEAKRETLKEQREEMDQLKSDFFDRLRKIGIGFEEFRILVKEEVKDAEKELGVVETEIRLLEESLKELESENVRDVSEDYEKVRNQLEALSQEISDLERKEGRLNHLIEETLRRERELKSLEKKLKEMSDEYNNLDLLRKYLFDKSNFSRYFTGRVLEAVLKRTKAYLDILTNGRFDIDFDDEKGGFIIKDWGIERPARGLSGGERALISISLAMSLAEVASGRLDAFFIDEGFSSLDTENKEKIASVLKELERLNKVIVFITHDREFSEAFDRKLRITGGVVVNE.

ATP is bound by residues N32, G33, A34, G35, K36, S37, S38, R53, Y54, D59, V61, and R63. S37 serves as a coordination point for Mg(2+). Mg(2+) is bound at residue Q142. Coiled-coil stretches lie at residues 155–345 (EITE…EELD) and 389–427 (LLSIEKTENETKNELEKLLDELSILKKDHMKWLAYQIAS). One can recognise a Zinc-hook domain in the interval 389-488 (LLSIEKTENE…SLSSLIEDLL (100 aa)). Zn(2+) contacts are provided by C435 and C438. 2 coiled-coil regions span residues 460-488 (DQKRSELENTLNVLKERKKSLSSLIEDLL) and 534-711 (KIEE…LFDK). D797 is a Mg(2+) binding site.

Belongs to the SMC family. RAD50 subfamily. As to quaternary structure, homodimer. Forms a complex with Mre11. The cofactor is Zn(2+).

It catalyses the reaction ATP + H2O = ADP + phosphate + H(+). Functionally, involved in DNA double-strand break repair (DSBR). The Rad50/Mre11 complex possesses single-strand endonuclease activity and ATP-dependent double-strand-specific 3'-5' exonuclease activity. Rad50 provides an ATP-dependent control of Mre11 by positioning DNA ends into the Mre11 active site: ATP-binding induces a large structural change from an open form with accessible Mre11 nuclease sites into a closed form. The sequence is that of DNA double-strand break repair Rad50 ATPase from Thermotoga maritima (strain ATCC 43589 / DSM 3109 / JCM 10099 / NBRC 100826 / MSB8).